Consider the following 377-residue polypeptide: tRNA/tmRNA (uracil-C(5))-methyltransferase (377 aa).

S-adenosyl-L-methionine is bound by residues Q199, Y227, N232, E248, and D308. C333 serves as the catalytic Nucleophile. Catalysis depends on E367, which acts as the Proton acceptor.

The protein belongs to the class I-like SAM-binding methyltransferase superfamily. RNA M5U methyltransferase family. TrmA subfamily.

The enzyme catalyses uridine(54) in tRNA + S-adenosyl-L-methionine = 5-methyluridine(54) in tRNA + S-adenosyl-L-homocysteine + H(+). It catalyses the reaction uridine(341) in tmRNA + S-adenosyl-L-methionine = 5-methyluridine(341) in tmRNA + S-adenosyl-L-homocysteine + H(+). Dual-specificity methyltransferase that catalyzes the formation of 5-methyluridine at position 54 (m5U54) in all tRNAs, and that of position 341 (m5U341) in tmRNA (transfer-mRNA). The chain is tRNA/tmRNA (uracil-C(5))-methyltransferase from Aeromonas salmonicida (strain A449).